We begin with the raw amino-acid sequence, 1198 residues long: DNA polymerase (1198 aa).

Disordered regions lie at residues Met-1 to Thr-87, Leu-179 to Pro-199, and Gln-904 to Gly-930. Composition is skewed to low complexity over residues Gln-30–Ala-40 and Ala-57–Pro-68.

Belongs to the DNA polymerase type-B family. Heterodimer with the terminal protein; this heterodimer binds to bp 9 to 18 of the genome. Forms a complex with viral pTP, DBP and hosts NFIA and POU2F1/OCT1 for initiation of replication.

The protein localises to the host nucleus. It carries out the reaction DNA(n) + a 2'-deoxyribonucleoside 5'-triphosphate = DNA(n+1) + diphosphate. In terms of biological role, eukaryotic-type DNA polymerase involved in viral genomic replication. DNA synthesis is protein primed, and acts in a strand displacement replication. Assembles in complex with viral pTP, DBP, host NFIA and host POU2F1/OCT1 on viral origin of replication. The polymerase covalently transfers dCMP onto pTP, thereby initiating complementary strand synthesis. The polypeptide is DNA polymerase (Homo sapiens (Human)).